Reading from the N-terminus, the 1047-residue chain is Atrial natriuretic peptide receptor 2 (1047 aa).

The first 22 residues, 1-22, serve as a signal peptide directing secretion; the sequence is MALPSLLLLVAALAGGVRPPGA. Over 23 to 458 the chain is Extracellular; the sequence is RNLTLAVVLP…DKTPLSTLAI (436 aa). Residues asparagine 24 and asparagine 35 are each glycosylated (N-linked (GlcNAc...) asparagine). A disulfide bond links cysteine 75 and cysteine 101. N-linked (GlcNAc...) asparagine glycosylation is found at asparagine 161, asparagine 195, asparagine 244, asparagine 277, and asparagine 349. The helical transmembrane segment at 459-478 threads the bilayer; that stretch reads VALGTGITFIMFGVSSFLIF. Residues 479-1047 lie on the Cytoplasmic side of the membrane; that stretch reads RKLMLEKELA…GERKGPPGLL (569 aa). Position 513 is a phosphoserine (serine 513). The Protein kinase domain maps to 513 to 786; it reads SRLTLSLRGS…PDFGQIKGFI (274 aa). Threonine 516 bears the Phosphothreonine mark. Phosphoserine is present on residues serine 518, serine 522, serine 523, and serine 526. The residue at position 529 (threonine 529) is a Phosphothreonine. Residues 861–991 form the Guanylate cyclase domain; sequence TIYFSDIVGF…DTVNTASRME (131 aa).

This sequence belongs to the adenylyl cyclase class-4/guanylyl cyclase family. Post-translationally, phosphorylated. Phosphorylation of the protein kinase-like domain is required for full activation by CNP. In terms of processing, glycosylated.

It is found in the cell membrane. It catalyses the reaction GTP = 3',5'-cyclic GMP + diphosphate. Functionally, receptor for the C-type natriuretic peptide NPPC/CNP hormone. Has guanylate cyclase activity upon binding of its ligand. May play a role in the regulation of skeletal growth. In Homo sapiens (Human), this protein is Atrial natriuretic peptide receptor 2 (NPR2).